A 244-amino-acid chain; its full sequence is Phosphoadenosine 5'-phosphosulfate reductase (244 aa).

C239 (nucleophile; cysteine thiosulfonate intermediate) is an active-site residue.

It belongs to the PAPS reductase family. CysH subfamily.

It localises to the cytoplasm. The catalysed reaction is [thioredoxin]-disulfide + sulfite + adenosine 3',5'-bisphosphate + 2 H(+) = [thioredoxin]-dithiol + 3'-phosphoadenylyl sulfate. Its pathway is sulfur metabolism; hydrogen sulfide biosynthesis; sulfite from sulfate: step 3/3. Its function is as follows. Catalyzes the formation of sulfite from phosphoadenosine 5'-phosphosulfate (PAPS) using thioredoxin as an electron donor. The sequence is that of Phosphoadenosine 5'-phosphosulfate reductase from Zymomonas mobilis subsp. mobilis (strain ATCC 31821 / ZM4 / CP4).